The sequence spans 472 residues: CAAX prenyl protease 1 homolog (472 aa).

The Lumenal portion of the chain corresponds to 1 to 8 (MDVGGALD). Residues 9–29 (LYGCSVNVYNAILIFIWVLFL) form a helical membrane-spanning segment. Over 30 to 75 (WETYINLRQLKVAKRVTESPEEIKCLMNDVDFDKSRRYAIDKMNFD) the chain is Cytoplasmic. A helical membrane pass occupies residues 76-96 (IVSGFYNILSLSAVLYFQLIA). Over 97-124 (WAWHKSQEHMLFVCSYAPRSFGTTEGSE) the chain is Lumenal. A helical membrane pass occupies residues 125 to 145 (ILFSLLFTVYVALFQFFESLP). The Cytoplasmic portion of the chain corresponds to 146–175 (WSYYRHFVIEERYGFNKQTIGFFIKDRLKS). Residues 176–196 (LAVGLVIGLPIISMLVWIIKA) traverse the membrane as a helical segment. Topologically, residues 197–207 (GGHYFYIYAYG) are lumenal. A helical transmembrane segment spans residues 208–228 (FTFVVSFIIMFIYPEFIAPIF). The Cytoplasmic segment spans residues 229–340 (DRYEHFPDCE…LGHWKLKHMT (112 aa)). Zn(2+) is bound at residue H329. E330 is an active-site residue. H333 contacts Zn(2+). A helical transmembrane segment spans residues 341–361 (FNLIIAQINIFFMFFAFGQLI). The Lumenal portion of the chain corresponds to 362-382 (NVDQLFVDFGFPPSTAPILIR). The helical transmembrane segment at 383 to 403 (LIVVFQFIFMPYSSVLEFLMT) threads the bilayer. Residues 404 to 472 (MLSRKFEFQA…AIDAKMGKEK (69 aa)) lie on the Cytoplasmic side of the membrane. A Zn(2+)-binding site is contributed by E410. D414 serves as the catalytic Proton donor.

This sequence belongs to the peptidase M48A family. As to quaternary structure, homodimer; disulfide-linked. The cofactor is Zn(2+).

It is found in the endoplasmic reticulum membrane. The catalysed reaction is Hydrolyzes the peptide bond -P2-(S-farnesyl or geranylgeranyl)C-P1'-P2'-P3'-COOH where P1' and P2' are amino acids with aliphatic side chains and P3' is any C-terminal residue.. With respect to regulation, inhibited by ethylenediaminetetraacetic acid (EDTA) but not by serine, aspartic or cysteine protease inhibitors. Inhibited by high concentration of Zn(2+) (&gt; 0.1 mM). Its function is as follows. Zinc-dependent metalloproteinase. Proteolytically removes the C-terminal three residues of farnesylated proteins. The sequence is that of CAAX prenyl protease 1 homolog from Taenia solium (Pork tapeworm).